The primary structure comprises 392 residues: L-rhamnonate dehydratase (392 aa).

Substrate-binding residues include His-22 and Arg-48. Mg(2+) contacts are provided by Asp-214, Glu-240, and Glu-268. The Proton acceptor role is filled by His-318. A substrate-binding site is contributed by Glu-338.

This sequence belongs to the mandelate racemase/muconate lactonizing enzyme family. RhamD subfamily. As to quaternary structure, homooctamer; tetramer of dimers. It depends on Mg(2+) as a cofactor.

The enzyme catalyses L-rhamnonate = 2-dehydro-3-deoxy-L-rhamnonate + H2O. Catalyzes the dehydration of L-rhamnonate to 2-keto-3-deoxy-L-rhamnonate (KDR). The chain is L-rhamnonate dehydratase from Paraburkholderia phytofirmans (strain DSM 17436 / LMG 22146 / PsJN) (Burkholderia phytofirmans).